The primary structure comprises 222 residues: Nucleoside triphosphate pyrophosphatase (222 aa).

The active-site Proton acceptor is Asp82.

The protein belongs to the Maf family. The cofactor is a divalent metal cation.

The protein resides in the cytoplasm. It catalyses the reaction a ribonucleoside 5'-triphosphate + H2O = a ribonucleoside 5'-phosphate + diphosphate + H(+). The enzyme catalyses a 2'-deoxyribonucleoside 5'-triphosphate + H2O = a 2'-deoxyribonucleoside 5'-phosphate + diphosphate + H(+). Nucleoside triphosphate pyrophosphatase. May have a dual role in cell division arrest and in preventing the incorporation of modified nucleotides into cellular nucleic acids. In Mycobacterium tuberculosis (strain ATCC 25177 / H37Ra), this protein is Nucleoside triphosphate pyrophosphatase.